Here is a 225-residue protein sequence, read N- to C-terminus: Urease accessory protein UreF (225 aa).

It belongs to the UreF family. In terms of assembly, ureD, UreF and UreG form a complex that acts as a GTP-hydrolysis-dependent molecular chaperone, activating the urease apoprotein by helping to assemble the nickel containing metallocenter of UreC. The UreE protein probably delivers the nickel.

It localises to the cytoplasm. In terms of biological role, required for maturation of urease via the functional incorporation of the urease nickel metallocenter. This chain is Urease accessory protein UreF, found in Picosynechococcus sp. (strain ATCC 27264 / PCC 7002 / PR-6) (Agmenellum quadruplicatum).